The primary structure comprises 334 residues: MFGSFNSLKNAWAQVFPQAPDFTESSIPDLLGKVYIVTGANSGLGKELSGILYSKNAKVYVAARSEAKAQAAIEFIKAAHPHSKGDLVYLQIDLADLSAIKSSVNAFLSQEARLDVLFNNAGVLAPHDAPKTAQGYELNLGTNTIGTFLLTKLLLPTLLNTAKSSPKDSVRVIWVSSIAVNFSEQGGLDMENLDYHEDKSAVTKYAVSKVGNFLHSVELARRHGANADGVVSVALNPGNLDTELGRDRSWLETKILRTFVLYPPVFGAYTELFAGLSDQITAEMVRDNNWIGPWGRFCRIREDIDQAARPRSEGGHGLAERFWRWTEEQVKPYV.

NADP(+)-binding residues include L44, K68, D93, N120, and K152. Catalysis depends on proton donor residues S176 and Y205. The NADP(+) site is built by Y205, K209, and N239. Catalysis depends on K209, which acts as the Lowers pKa of active site Tyr.

Belongs to the short-chain dehydrogenases/reductases (SDR) family.

It participates in mycotoxin biosynthesis. Its function is as follows. Short-chain dehydrogenase/reductase; part of the 2 gene clusters that mediate the biosynthesis of fusicoccins, diterpene glucosides that display phytohormone-like activity and function as potent activators of plasma membrane H(+)-ATPases in plants by modifying 14-3-3 proteins and cause the plant disease constriction canker. The first step in the pathway is performed by the fusicoccadiene synthase PaFS that possesses both prenyl transferase and terpene cyclase activity, converting isopentenyl diphosphate and dimethylallyl diphosphate into geranylgeranyl diphosphate (GGDP) and successively converting GGDP into fusicocca-2,10(14)-diene, a precursor for fusicoccin H. The second step is the oxidation at the C-8 position by the cytochrome P450 monooxygenase PaP450-2 to yield fusicocca-2,10(14)-diene-8-beta-ol. The cytochrome P450 monooxygenase PaP450-1 then catalyzes the hydroxylation at the C-16 position to produce fusicocca-2,10(14)-diene-8-beta,16-diol. The dioxygenase fc-dox then catalyzes the 16-oxydation of fusicocca-2,10(14)-diene-8-beta,16-diol to yield an aldehyde (8-beta-hydroxyfusicocca-1,10(14)-dien-16-al). The short-chain dehydrogenase/reductase fc-sdr catalyzes the reduction of the aldehyde to yield fusicocca-1,10(14)-diene-8-beta,16-diol. The next step is the hydroxylation at C-9 performed by the cytochrome P450 monooxygenase PaP450-3 that leads to fusicoccin H aglycon which is glycosylated to fusicoccin H by the O-glycosyltransferase PaGT. Hydroxylation at C-12 by the cytochrome P450 monooxygenase PaP450-4 leads then to the production of fusicoccin Q and is followed by methylation by the O-methyltransferase PaMT to yield fusicoccin P. Fusicoccin P is further converted to fusicoccin J via prenylation by the O-glucose prenyltransferase PaPT. Cytochrome P450 monooxygenase PaP450-5 then performs hydroxylation at C-19 to yield dideacetyl-fusicoccin A which is acetylated to 3'-O-deacetyl-fusicoccin A by the O-acetyltransferase PaAT-2. Finally, a another acetylation by the O-acetyltransferase PaAT-1 yields fusicoccin A. The sequence is that of Short-chain dehydrogenase/reductase from Phomopsis amygdali (Fusicoccum amygdali).